Consider the following 417-residue polypeptide: Type II methyltransferase M.Eco47II (417 aa).

The SAM-dependent MTase C5-type domain occupies 81-414 (YTVLELFAGA…KSVVHLLDKI (334 aa)). Residue C153 is part of the active site.

It belongs to the class I-like SAM-binding methyltransferase superfamily. C5-methyltransferase family.

It catalyses the reaction a 2'-deoxycytidine in DNA + S-adenosyl-L-methionine = a 5-methyl-2'-deoxycytidine in DNA + S-adenosyl-L-homocysteine + H(+). Functionally, a methylase that recognizes the double-stranded sequence 5'-GGNCC-3', methylates C-? on both strands, and protects the DNA from cleavage by both the Eco47I and Eco47II endonucleases. In Escherichia coli, this protein is Type II methyltransferase M.Eco47II.